The primary structure comprises 194 residues: Ras-like protein rasS (194 aa).

A GTP-binding site is contributed by 10–17; sequence GPGGVGKS. An Effector region motif is present at residues 32 to 40; the sequence is YDPTLEDSY. Residues 57–61 and 116–119 contribute to the GTP site; these read DTAGQ and NKCD. The interval 168–194 is disordered; it reads RQSNQHSNSQEQNTDQPIKKKKSCNLL. Over residues 169-180 the composition is skewed to low complexity; sequence QSNQHSNSQEQN. The residue at position 191 (Cys191) is a Cysteine methyl ester. Cys191 carries the S-geranylgeranyl cysteine lipid modification. Positions 192–194 are cleaved as a propeptide — removed in mature form; sequence NLL.

It belongs to the small GTPase superfamily. Ras family.

It is found in the cell membrane. The enzyme catalyses GTP + H2O = GDP + phosphate + H(+). Functionally, ras proteins bind GDP/GTP and possess intrinsic GTPase activity. The protein is Ras-like protein rasS (rasS) of Dictyostelium discoideum (Social amoeba).